A 117-amino-acid chain; its full sequence is MEYKRADRVADLLRREMADLLLRRIKDPRVSKVTITAIEVTDDLQNAKVFFCLMGAATEEEKRSAALGLNRGKGFMRLELGKRLHLRYLPQLSFHYDSSFEYGDKIERLLKELHKNE.

Belongs to the RbfA family. As to quaternary structure, monomer. Binds 30S ribosomal subunits, but not 50S ribosomal subunits or 70S ribosomes.

The protein resides in the cytoplasm. Functionally, one of several proteins that assist in the late maturation steps of the functional core of the 30S ribosomal subunit. Associates with free 30S ribosomal subunits (but not with 30S subunits that are part of 70S ribosomes or polysomes). Required for efficient processing of 16S rRNA. May interact with the 5'-terminal helix region of 16S rRNA. The polypeptide is Ribosome-binding factor A (Syntrophobacter fumaroxidans (strain DSM 10017 / MPOB)).